Reading from the N-terminus, the 418-residue chain is Glutamyl-tRNA reductase (418 aa).

Substrate-binding positions include Thr49 to Arg52, Ser109, Glu114 to Gln116, and Gln120. Residue Cys50 is the Nucleophile of the active site. Gly189 to Ile194 contacts NADP(+).

The protein belongs to the glutamyl-tRNA reductase family. In terms of assembly, homodimer.

The catalysed reaction is (S)-4-amino-5-oxopentanoate + tRNA(Glu) + NADP(+) = L-glutamyl-tRNA(Glu) + NADPH + H(+). Its pathway is porphyrin-containing compound metabolism; protoporphyrin-IX biosynthesis; 5-aminolevulinate from L-glutamyl-tRNA(Glu): step 1/2. Catalyzes the NADPH-dependent reduction of glutamyl-tRNA(Glu) to glutamate 1-semialdehyde (GSA). The protein is Glutamyl-tRNA reductase of Klebsiella pneumoniae (strain 342).